A 111-amino-acid polypeptide reads, in one-letter code: uncharacterized protein (111 aa).

This is an uncharacterized protein from Caenorhabditis elegans.